A 410-amino-acid polypeptide reads, in one-letter code: Peptidase T (410 aa).

A Zn(2+)-binding site is contributed by histidine 78. Aspartate 80 is an active-site residue. Aspartate 140 is a binding site for Zn(2+). Glutamate 174 (proton acceptor) is an active-site residue. Positions 175, 197, and 379 each coordinate Zn(2+).

Belongs to the peptidase M20B family. It depends on Zn(2+) as a cofactor.

It localises to the cytoplasm. The catalysed reaction is Release of the N-terminal residue from a tripeptide.. In terms of biological role, cleaves the N-terminal amino acid of tripeptides. The polypeptide is Peptidase T (Vibrio atlanticus (strain LGP32) (Vibrio splendidus (strain Mel32))).